A 157-amino-acid polypeptide reads, in one-letter code: 2-C-methyl-D-erythritol 2,4-cyclodiphosphate synthase (157 aa).

Positions 9 and 11 each coordinate a divalent metal cation. Residues 9 to 11 (DVH) and 35 to 36 (HS) contribute to the 4-CDP-2-C-methyl-D-erythritol 2-phosphate site. Histidine 43 provides a ligand contact to a divalent metal cation. 4-CDP-2-C-methyl-D-erythritol 2-phosphate-binding positions include 57–59 (DIG), 62–66 (FPETD), 133–136 (TTME), phenylalanine 140, and lysine 143.

This sequence belongs to the IspF family. Homotrimer. A divalent metal cation is required as a cofactor.

It carries out the reaction 4-CDP-2-C-methyl-D-erythritol 2-phosphate = 2-C-methyl-D-erythritol 2,4-cyclic diphosphate + CMP. It functions in the pathway isoprenoid biosynthesis; isopentenyl diphosphate biosynthesis via DXP pathway; isopentenyl diphosphate from 1-deoxy-D-xylulose 5-phosphate: step 4/6. Involved in the biosynthesis of isopentenyl diphosphate (IPP) and dimethylallyl diphosphate (DMAPP), two major building blocks of isoprenoid compounds. Catalyzes the conversion of 4-diphosphocytidyl-2-C-methyl-D-erythritol 2-phosphate (CDP-ME2P) to 2-C-methyl-D-erythritol 2,4-cyclodiphosphate (ME-CPP) with a corresponding release of cytidine 5-monophosphate (CMP). In Enterococcus faecalis (strain ATCC 700802 / V583), this protein is 2-C-methyl-D-erythritol 2,4-cyclodiphosphate synthase.